The chain runs to 253 residues: Vitamin B12 import ATP-binding protein BtuD (253 aa).

Residues 3–237 (LDAKNLAMPP…EQLESTFATQ (235 aa)) form the ABC transporter domain. Residue 31 to 38 (GPNGSGKS) coordinates ATP.

This sequence belongs to the ABC transporter superfamily. Vitamin B12 importer (TC 3.A.1.13.1) family. The complex is composed of two ATP-binding proteins (BtuD), two transmembrane proteins (BtuC) and a solute-binding protein (BtuF).

The protein localises to the cell inner membrane. It carries out the reaction an R-cob(III)alamin(out) + ATP + H2O = an R-cob(III)alamin(in) + ADP + phosphate + H(+). Functionally, part of the ABC transporter complex BtuCDF involved in vitamin B12 import. Responsible for energy coupling to the transport system. The protein is Vitamin B12 import ATP-binding protein BtuD of Photobacterium profundum (strain SS9).